The primary structure comprises 568 residues: Proline--tRNA ligase (568 aa).

It belongs to the class-II aminoacyl-tRNA synthetase family. ProS type 1 subfamily. Homodimer.

The protein localises to the cytoplasm. It carries out the reaction tRNA(Pro) + L-proline + ATP = L-prolyl-tRNA(Pro) + AMP + diphosphate. Functionally, catalyzes the attachment of proline to tRNA(Pro) in a two-step reaction: proline is first activated by ATP to form Pro-AMP and then transferred to the acceptor end of tRNA(Pro). As ProRS can inadvertently accommodate and process non-cognate amino acids such as alanine and cysteine, to avoid such errors it has two additional distinct editing activities against alanine. One activity is designated as 'pretransfer' editing and involves the tRNA(Pro)-independent hydrolysis of activated Ala-AMP. The other activity is designated 'posttransfer' editing and involves deacylation of mischarged Ala-tRNA(Pro). The misacylated Cys-tRNA(Pro) is not edited by ProRS. The protein is Proline--tRNA ligase of Chromobacterium violaceum (strain ATCC 12472 / DSM 30191 / JCM 1249 / CCUG 213 / NBRC 12614 / NCIMB 9131 / NCTC 9757 / MK).